A 238-amino-acid chain; its full sequence is Small ribosomal subunit protein uS2 (238 aa).

Belongs to the universal ribosomal protein uS2 family.

This chain is Small ribosomal subunit protein uS2, found in Moorella thermoacetica (strain ATCC 39073 / JCM 9320).